The primary structure comprises 239 residues: Uridylate kinase (239 aa).

Residue 10 to 13 coordinates ATP; sequence KFSG. An involved in allosteric activation by GTP region spans residues 18 to 23; the sequence is GENGFG. G52 contacts UMP. ATP-binding residues include G53 and R57. UMP is bound by residues D73 and 134-141; that span reads TGNPYFTT. Positions 161, 167, and 170 each coordinate ATP.

This sequence belongs to the UMP kinase family. In terms of assembly, homohexamer.

It is found in the cytoplasm. It carries out the reaction UMP + ATP = UDP + ADP. Its pathway is pyrimidine metabolism; CTP biosynthesis via de novo pathway; UDP from UMP (UMPK route): step 1/1. Allosterically activated by GTP. Inhibited by UTP. Functionally, catalyzes the reversible phosphorylation of UMP to UDP. The chain is Uridylate kinase from Campylobacter jejuni subsp. jejuni serotype O:6 (strain 81116 / NCTC 11828).